We begin with the raw amino-acid sequence, 239 residues long: Pentatricopeptide repeat-containing protein DWY1, chloroplastic (239 aa).

The transit peptide at 1–35 directs the protein to the chloroplast; sequence MALEAAFSMSFCSFSVPKAIFCERETSSFQRITSR. 2 disordered regions span residues 40–59 and 101–122; these read AGES…KETS and HISP…SGGE. Positions 111–122 are enriched in basic and acidic residues; sequence VRGDKPEISGGE. The tract at residues 113-144 is type E(+) motif; it reads GDKPEISGGEKKAIVDRSKAYVKLKSLGKEVR. Positions 145 to 239 are type DYW motif; sequence DAGYVPETKY…DGNCSCGDYW (95 aa).

It belongs to the PPR family. PCMP-H subfamily. As to quaternary structure, interacts with CRR4. Requires Zn(2+) as cofactor.

Its subcellular location is the plastid. The protein resides in the chloroplast. In terms of biological role, plays a major role in single RNA editing events in chloroplasts. Acts as a site-recognition transacting factor involved in the edition of the site 1 of ndhD (ndhD-1 site corresponding to cytidine-2), which is a plastid-encoded subunit of the NADH-plastoquinone oxidoreductase. The interaction with CRR4 is required for its function in editing the ndhD-1 site. The polypeptide is Pentatricopeptide repeat-containing protein DWY1, chloroplastic (Arabidopsis thaliana (Mouse-ear cress)).